A 331-amino-acid chain; its full sequence is Retinol dehydrogenase 13 (331 aa).

Ser2 is modified (N-acetylserine). 45 to 51 (GANTGIG) contacts NADP(+). Ser174 is a substrate binding site. The active-site Proton acceptor is the Tyr200. Phosphoserine is present on Ser323.

Belongs to the short-chain dehydrogenases/reductases (SDR) family. Widely expressed. In the retina, detected in the inner segment of the photoreceptor cells. Weak signals are observed in a small population of inner nuclear neurons and the inner plexiform layer.

It is found in the mitochondrion inner membrane. The enzyme catalyses all-trans-retinol + NADP(+) = all-trans-retinal + NADPH + H(+). The protein operates within cofactor metabolism; retinol metabolism. Retinol dehydrogenase with a clear preference for NADP. Oxidizes all-trans-retinol, but seems to reduce all-trans-retinal with much higher efficiency. Has no activity toward steroids. The chain is Retinol dehydrogenase 13 (RDH13) from Homo sapiens (Human).